The following is an 831-amino-acid chain: Periplasmic nitrate reductase (831 aa).

Residues 1-29 (MTLSRRDFIKQTAVAATASVAGVTLPAGA) constitute a signal peptide (tat-type signal). The 57-residue stretch at 41 to 97 (LKWSKAPCRFCGTGCGVTVAVRDNKVVATNGDPQAEVNKGLNCVKGYFLSKIMYGQD) folds into the 4Fe-4S Mo/W bis-MGD-type domain. [4Fe-4S] cluster is bound by residues C48, C51, C55, and C83. Residues K85, Q152, N177, C181, 214–221 (WGSNMAEM), 245–249 (STFTH), 264–266 (QTD), M375, Q379, N485, 511–512 (SD), K534, D561, and 721–730 (TGRVLEHWHS) contribute to the Mo-bis(molybdopterin guanine dinucleotide) site. Substrate is bound at residue W797. The Mo-bis(molybdopterin guanine dinucleotide) site is built by N805 and K822.

It belongs to the prokaryotic molybdopterin-containing oxidoreductase family. NasA/NapA/NarB subfamily. As to quaternary structure, component of the periplasmic nitrate reductase NapAB complex composed of NapA and NapB. Requires [4Fe-4S] cluster as cofactor. The cofactor is Mo-bis(molybdopterin guanine dinucleotide). In terms of processing, predicted to be exported by the Tat system. The position of the signal peptide cleavage has not been experimentally proven.

The protein resides in the periplasm. It carries out the reaction 2 Fe(II)-[cytochrome] + nitrate + 2 H(+) = 2 Fe(III)-[cytochrome] + nitrite + H2O. Its function is as follows. Catalytic subunit of the periplasmic nitrate reductase complex NapAB. Receives electrons from NapB and catalyzes the reduction of nitrate to nitrite. The polypeptide is Periplasmic nitrate reductase (Cupriavidus taiwanensis (strain DSM 17343 / BCRC 17206 / CCUG 44338 / CIP 107171 / LMG 19424 / R1) (Ralstonia taiwanensis (strain LMG 19424))).